Consider the following 152-residue polypeptide: Transcriptional regulator MraZ (152 aa).

2 SpoVT-AbrB domains span residues 5–52 (ANAV…PLPE) and 81–124 (AVDL…NEDA).

Belongs to the MraZ family. Forms oligomers.

Its subcellular location is the cytoplasm. The protein localises to the nucleoid. In Azotobacter vinelandii (strain DJ / ATCC BAA-1303), this protein is Transcriptional regulator MraZ.